The following is a 203-amino-acid chain: Protein GrpE (203 aa).

A disordered region spans residues Met1–Arg38.

Belongs to the GrpE family. In terms of assembly, homodimer.

The protein localises to the cytoplasm. Functionally, participates actively in the response to hyperosmotic and heat shock by preventing the aggregation of stress-denatured proteins, in association with DnaK and GrpE. It is the nucleotide exchange factor for DnaK and may function as a thermosensor. Unfolded proteins bind initially to DnaJ; upon interaction with the DnaJ-bound protein, DnaK hydrolyzes its bound ATP, resulting in the formation of a stable complex. GrpE releases ADP from DnaK; ATP binding to DnaK triggers the release of the substrate protein, thus completing the reaction cycle. Several rounds of ATP-dependent interactions between DnaJ, DnaK and GrpE are required for fully efficient folding. In Paramagnetospirillum magneticum (strain ATCC 700264 / AMB-1) (Magnetospirillum magneticum), this protein is Protein GrpE.